The sequence spans 118 residues: Large ribosomal subunit protein bL20 (118 aa).

This sequence belongs to the bacterial ribosomal protein bL20 family.

Functionally, binds directly to 23S ribosomal RNA and is necessary for the in vitro assembly process of the 50S ribosomal subunit. It is not involved in the protein synthesizing functions of that subunit. This chain is Large ribosomal subunit protein bL20, found in Bacillus anthracis (strain CDC 684 / NRRL 3495).